A 189-amino-acid chain; its full sequence is Glucose-6-phosphate isomerase (189 aa).

Fe cation-binding residues include His-88, His-90, Glu-97, and His-136.

It belongs to the archaeal-type GPI family. In terms of assembly, homodimer.

The protein localises to the cytoplasm. It catalyses the reaction alpha-D-glucose 6-phosphate = beta-D-fructose 6-phosphate. It functions in the pathway carbohydrate degradation; glycolysis; D-glyceraldehyde 3-phosphate and glycerone phosphate from D-glucose: step 2/4. The polypeptide is Glucose-6-phosphate isomerase (Thermococcus kodakarensis (strain ATCC BAA-918 / JCM 12380 / KOD1) (Pyrococcus kodakaraensis (strain KOD1))).